The sequence spans 201 residues: Recombination protein RecR (201 aa).

The C4-type zinc-finger motif lies at 60 to 75; sequence CQVCGNVDVRDPCTVC. The Toprim domain maps to 83 to 178; the sequence is SVLVVVAEVA…KVTRLAHGVP (96 aa).

The protein belongs to the RecR family.

In terms of biological role, may play a role in DNA repair. It seems to be involved in an RecBC-independent recombinational process of DNA repair. It may act with RecF and RecO. The protein is Recombination protein RecR of Azorhizobium caulinodans (strain ATCC 43989 / DSM 5975 / JCM 20966 / LMG 6465 / NBRC 14845 / NCIMB 13405 / ORS 571).